A 363-amino-acid chain; its full sequence is Peptide chain release factor 2 (363 aa).

Gln251 carries the post-translational modification N5-methylglutamine.

Belongs to the prokaryotic/mitochondrial release factor family. In terms of processing, methylated by PrmC. Methylation increases the termination efficiency of RF2.

The protein localises to the cytoplasm. Functionally, peptide chain release factor 2 directs the termination of translation in response to the peptide chain termination codons UGA and UAA. This is Peptide chain release factor 2 from Helicobacter acinonychis (strain Sheeba).